Here is a 401-residue protein sequence, read N- to C-terminus: Imidazolonepropionase (401 aa).

Residues H66 and H68 each contribute to the Fe(3+) site. Zn(2+)-binding residues include H66 and H68. Residues R75, Y138, and H171 each contribute to the 4-imidazolone-5-propanoate site. Y138 lines the N-formimidoyl-L-glutamate pocket. H236 lines the Fe(3+) pocket. H236 provides a ligand contact to Zn(2+). Q239 lines the 4-imidazolone-5-propanoate pocket. Fe(3+) is bound at residue D311. Residue D311 coordinates Zn(2+). 2 residues coordinate N-formimidoyl-L-glutamate: N313 and G315. T316 provides a ligand contact to 4-imidazolone-5-propanoate.

Belongs to the metallo-dependent hydrolases superfamily. HutI family. It depends on Zn(2+) as a cofactor. The cofactor is Fe(3+).

The protein resides in the cytoplasm. The enzyme catalyses 4-imidazolone-5-propanoate + H2O = N-formimidoyl-L-glutamate. It participates in amino-acid degradation; L-histidine degradation into L-glutamate; N-formimidoyl-L-glutamate from L-histidine: step 3/3. Functionally, catalyzes the hydrolytic cleavage of the carbon-nitrogen bond in imidazolone-5-propanoate to yield N-formimidoyl-L-glutamate. It is the third step in the universal histidine degradation pathway. This is Imidazolonepropionase from Pseudomonas entomophila (strain L48).